The primary structure comprises 348 residues: Spore wall and anchoring disk complex protein EnP1 (348 aa).

The first 16 residues, 1 to 16 (MKLLGLLISAFGAINA), serve as a signal peptide directing secretion. N-linked (GlcNAc...) asparagine glycans are attached at residues Asn47, Asn139, and Asn140. The HBM1 signature appears at 193-198 (PRHGRS). Residues 248–256 (IRKGKDKKC) carry the HBM2 motif. The HBM3 signature appears at 322 to 327 (LKKIRG).

It is found in the spore wall. The protein localises to the spore. It localises to the perispore. In terms of biological role, spore wall protein involved in the adhesion to host cells surface glycoaminoglycans (GAGs). Microsporidian spore adherence is an integral part of activation and host cell infection. The chain is Spore wall and anchoring disk complex protein EnP1 (EnP1) from Encephalitozoon intestinalis (Microsporidian parasite).